A 476-amino-acid chain; its full sequence is Aspartyl/glutamyl-tRNA(Asn/Gln) amidotransferase subunit B (476 aa).

Belongs to the GatB/GatE family. GatB subfamily. Heterotrimer of A, B and C subunits.

It catalyses the reaction L-glutamyl-tRNA(Gln) + L-glutamine + ATP + H2O = L-glutaminyl-tRNA(Gln) + L-glutamate + ADP + phosphate + H(+). It carries out the reaction L-aspartyl-tRNA(Asn) + L-glutamine + ATP + H2O = L-asparaginyl-tRNA(Asn) + L-glutamate + ADP + phosphate + 2 H(+). In terms of biological role, allows the formation of correctly charged Asn-tRNA(Asn) or Gln-tRNA(Gln) through the transamidation of misacylated Asp-tRNA(Asn) or Glu-tRNA(Gln) in organisms which lack either or both of asparaginyl-tRNA or glutaminyl-tRNA synthetases. The reaction takes place in the presence of glutamine and ATP through an activated phospho-Asp-tRNA(Asn) or phospho-Glu-tRNA(Gln). This Bacillus cytotoxicus (strain DSM 22905 / CIP 110041 / 391-98 / NVH 391-98) protein is Aspartyl/glutamyl-tRNA(Asn/Gln) amidotransferase subunit B.